A 337-amino-acid polypeptide reads, in one-letter code: ATP-dependent 6-phosphofructokinase (337 aa).

Position 11 (Gly-11) interacts with ATP. 21 to 25 (RAVVR) provides a ligand contact to ADP. Residues 72–73 (RY) and 102–105 (GDGS) each bind ATP. Asp-103 provides a ligand contact to Mg(2+). Residue 125–127 (TID) coordinates substrate. The active-site Proton acceptor is Asp-127. Position 154 (Arg-154) interacts with ADP. Residues Arg-162 and 169-171 (MGR) each bind substrate. Residues 185 to 187 (GAD) and 214 to 216 (KNH) each bind ADP. Residues Glu-223, Arg-245, and 251 to 254 (HILR) each bind substrate.

The protein belongs to the phosphofructokinase type A (PFKA) family. ATP-dependent PFK group I subfamily. Prokaryotic clade 'B1' sub-subfamily. Homotetramer. Mg(2+) is required as a cofactor.

It is found in the cytoplasm. It carries out the reaction beta-D-fructose 6-phosphate + ATP = beta-D-fructose 1,6-bisphosphate + ADP + H(+). The protein operates within carbohydrate degradation; glycolysis; D-glyceraldehyde 3-phosphate and glycerone phosphate from D-glucose: step 3/4. Its activity is regulated as follows. Allosterically activated by ADP and other diphosphonucleosides, and allosterically inhibited by phosphoenolpyruvate. Functionally, catalyzes the phosphorylation of D-fructose 6-phosphate to fructose 1,6-bisphosphate by ATP, the first committing step of glycolysis. The chain is ATP-dependent 6-phosphofructokinase from Streptococcus mutans serotype c (strain ATCC 700610 / UA159).